A 319-amino-acid chain; its full sequence is ATP-dependent 6-phosphofructokinase (319 aa).

Gly11 is an ATP binding site. 21–25 (RAVVR) serves as a coordination point for ADP. Residues 72–73 (RC) and 102–105 (GDGS) contribute to the ATP site. Mg(2+) is bound at residue Asp103. Substrate is bound at residue 125-127 (TID). Asp127 (proton acceptor) is an active-site residue. Arg154 is an ADP binding site. Substrate-binding positions include Arg162 and 169–171 (MGR). Residues 185–187 (GAE), Arg211, and 213–215 (KKH) each bind ADP. Substrate contacts are provided by residues Glu222, Arg243, and 249–252 (HVQR).

Belongs to the phosphofructokinase type A (PFKA) family. ATP-dependent PFK group I subfamily. Prokaryotic clade 'B1' sub-subfamily. As to quaternary structure, homotetramer. The cofactor is Mg(2+).

It localises to the cytoplasm. It carries out the reaction beta-D-fructose 6-phosphate + ATP = beta-D-fructose 1,6-bisphosphate + ADP + H(+). It participates in carbohydrate degradation; glycolysis; D-glyceraldehyde 3-phosphate and glycerone phosphate from D-glucose: step 3/4. Allosterically activated by ADP and other diphosphonucleosides, and allosterically inhibited by phosphoenolpyruvate. Functionally, catalyzes the phosphorylation of D-fructose 6-phosphate to fructose 1,6-bisphosphate by ATP, the first committing step of glycolysis. The chain is ATP-dependent 6-phosphofructokinase from Geobacillus sp. (strain WCH70).